The following is a 263-amino-acid chain: L-aspartate dehydrogenase (263 aa).

The NAD(+) site is built by Ala120 and Asn186. His216 is a catalytic residue.

It belongs to the L-aspartate dehydrogenase family.

The enzyme catalyses L-aspartate + NADP(+) + H2O = oxaloacetate + NH4(+) + NADPH + H(+). It carries out the reaction L-aspartate + NAD(+) + H2O = oxaloacetate + NH4(+) + NADH + H(+). It functions in the pathway cofactor biosynthesis; NAD(+) biosynthesis; iminoaspartate from L-aspartate (dehydrogenase route): step 1/1. In terms of biological role, specifically catalyzes the NAD or NADP-dependent dehydrogenation of L-aspartate to iminoaspartate. This is L-aspartate dehydrogenase from Acinetobacter baylyi (strain ATCC 33305 / BD413 / ADP1).